An 819-amino-acid polypeptide reads, in one-letter code: Nonribosomal peptide synthetase 9 (819 aa).

Residues 202–591 are adenylation (A) domain; the sequence is LQAPTQHAVR…GRKDTQAKIR (390 aa). Residues 722 to 798 form the Carrier domain; it reads QPRNERERLI…SLAEFLSSSS (77 aa). S759 bears the O-(pantetheine 4'-phosphoryl)serine mark.

The protein belongs to the NRP synthetase family.

It functions in the pathway secondary metabolite biosynthesis. Its function is as follows. Nonribosomal peptide synthetase; part of the Fg3_54/C64 gene cluster that mediates the biosynthesis of the octapeptide fusaoctaxin A, a virulence factor that is required for cell-to-cell invasiveness of plant host. The 2 nonribosomal peptide synthetases NRPS9 and NRPS5 form an assembly line which likely utilizes GABA as a starter unit (loaded on the unique module M1 of NRPS9) and sequentially incorporates seven extender units composed of the residues L-Ala, L-allo-Ile, L-Ser, L-Val, L-Ser, L-Leu and L-Leu, respectively. During the process, each of the residues that are tethered on modules M3-M7 of NRPS5 containing an E domain can undergo an epimerization reaction to produce a D-configuration before the transpeptidation reaction occurs. The elongation of the peptidyl chain might be terminated by module M8-mediated L-Leu incorporation, followed by R domain-catalyzed 4 electron reduction to release the resulting octapeptide from the assembly line as an alcohol. Fusaoctaxin A is cleaved by the cluster specific ABC transporter FGM5 to the pentapeptide fusapentaxin A and the tripeptide fusatrixin A. The other enzymes from the cluster, FGM1, FGM2, FGM3 and FGM9 seem not to be involved in the biosynthesis of fusaoctaxin A and their functions have still to be determined. In Gibberella zeae (strain ATCC MYA-4620 / CBS 123657 / FGSC 9075 / NRRL 31084 / PH-1) (Wheat head blight fungus), this protein is Nonribosomal peptide synthetase 9.